The primary structure comprises 499 residues: Glycerol kinase (499 aa).

Position 13 (T13) interacts with ADP. ATP is bound by residues T13, T14, and S15. Sn-glycerol 3-phosphate is bound at residue T13. R17 lines the ADP pocket. Positions 83, 84, 135, and 244 each coordinate sn-glycerol 3-phosphate. Residues R83, E84, Y135, D244, and Q245 each coordinate glycerol. Positions 266 and 309 each coordinate ADP. ATP-binding residues include T266, G309, Q313, and G410. ADP-binding residues include G410 and N414.

Belongs to the FGGY kinase family.

It catalyses the reaction glycerol + ATP = sn-glycerol 3-phosphate + ADP + H(+). It participates in polyol metabolism; glycerol degradation via glycerol kinase pathway; sn-glycerol 3-phosphate from glycerol: step 1/1. Its activity is regulated as follows. Inhibited by fructose 1,6-bisphosphate (FBP). Key enzyme in the regulation of glycerol uptake and metabolism. Catalyzes the phosphorylation of glycerol to yield sn-glycerol 3-phosphate. The sequence is that of Glycerol kinase from Paraburkholderia phytofirmans (strain DSM 17436 / LMG 22146 / PsJN) (Burkholderia phytofirmans).